Consider the following 132-residue polypeptide: C-glycoside deglycosidase beta subunit (132 aa).

This sequence belongs to the C-glycoside deglycosidase beta subunit family. In terms of assembly, heterodimer composed of an alpha subunit (CarB2) and a beta subunit (CarC2). A divalent metal cation serves as cofactor.

The enzyme catalyses 3''-dehydroorientin = 1,5-anhydro-D-erythro-hex-1-en-3-ulose + luteolin. Activity is strongly reduced in the presence of chelating agents. Its function is as follows. Carbon-carbon bond-cleaving enzyme which participates in the metabolism of C-glycosides. Acts on the C8-glycosylated compound 3''-dehydroorientin (3''-oxo-orientin). This is C-glycoside deglycosidase beta subunit from Arthrobacter globiformis (strain ATCC 8010 / DSM 20124 / JCM 1332 / NBRC 12137 / NCIMB 8907 / NRRL B-2979 / 168).